Reading from the N-terminus, the 709-residue chain is MNPIVKQFKYGQHTVTLETGAIARQATAAVMASMDDTTVFVTVVAKKDVKEGQDFFPLTVNYQERTYAAGKIPGGFFKREGRPSEGETLIARLIDRPIRPLFPEGFFNEIQVVATVVSVNPQISPDLVAMIGASAALTLSGVPFNGPIGAARVGFIDNQFVLNPTMAEQKQSRLDLVVAGTDKAVLMVESEADVLTEEQMLASVVFGHQQQQVVIEAIKEFAKEAGKPRWDWVAPQPNTDLINKVKAIAEARLGDAYRITEKQLRYEQIDAIKADVIAQITAEDEEISEGKIVDIFTALESQIVRGRIIAGEPRIDGRTVDTVRALDICTGVLPRTHGSAIFTRGETQALAVATLGTERDAQIIDELTGERQDHFLFHYNFPPYSVGETGMIGSPKRREIGHGRLAKRGVAAVMPSLAEFPYVVRVVSEITESNGSSSMASVCGASLALMDAGVPIKAAVAGIAMGLVKEEEKFVVLSDILGDEDHLGDMDFKVAGTREGVTALQMDIKIEGITPEIMQIALNQAKSARMHILGVMEQAIPAPRADISDYAPRIYTMKIDPKKIKDVIGKGGATIRSLTEETGTSIDIDDDGTVKIAAVDSNAAKNVMGRIEEIVAEVEAGAIYKGKVTRLADFGAFVAIVGNKEGLVHISQIAEERVEKVSDYLQVGQEVNVKVVEIDRQGRIRLTMKDLAPKQETEINQEDPVEEQE.

Positions 485 and 491 each coordinate Mg(2+). A KH domain is found at Pro552 to Ile611. In terms of domain architecture, S1 motif spans Gly621–Lys689.

The protein belongs to the polyribonucleotide nucleotidyltransferase family. As to quaternary structure, component of the RNA degradosome, which is a multiprotein complex involved in RNA processing and mRNA degradation. Requires Mg(2+) as cofactor.

The protein localises to the cytoplasm. It catalyses the reaction RNA(n+1) + phosphate = RNA(n) + a ribonucleoside 5'-diphosphate. In terms of biological role, involved in mRNA degradation. Catalyzes the phosphorolysis of single-stranded polyribonucleotides processively in the 3'- to 5'-direction. The polypeptide is Polyribonucleotide nucleotidyltransferase (Haemophilus influenzae (strain PittEE)).